The primary structure comprises 264 residues: uncharacterized protein (264 aa).

The first 21 residues, 1 to 21 (MMWNYFVTCIVLYANIISIHT), serve as a signal peptide directing secretion. Positions 182-247 (QQPNAAQVPT…AANNGLDLTS (66 aa)) are disordered. The segment covering 190–213 (PTTSQQQPTSNTGGQQPPTNASNP) has biased composition (low complexity). Asparagine 209 carries N-linked (GlcNAc...) asparagine glycosylation. Pro residues predominate over residues 214–226 (PTNPQPTPTPAQP). The segment covering 230 to 247 (GTQVQQTPAANNGLDLTS) has biased composition (polar residues).

Component of the acid-insoluble and acid-soluble organic matrix of calcified layers of the shell (at protein level).

Its subcellular location is the secreted. This is an uncharacterized protein from Lottia gigantea (Giant owl limpet).